Consider the following 280-residue polypeptide: uncharacterized protein (280 aa).

Transmembrane regions (helical) follow at residues 46 to 66, 81 to 101, 114 to 134, 137 to 157, 170 to 190, and 225 to 245; these read LIFLLALPFLTLPFDSYFVCT, IACSYFVFPLISYQIWCFLIP, FFYLSGSCFFLFLFLTFSWVV, VWHFLYFVGATSTNSLMIKLQ, ILFISSVCSQVPVIVICLLEL, and IVACFLISLIIELAIFVALIV. Residues 258-280 form a disordered region; the sequence is ESGSIEKKNKSSPPPRTWQSNYQ.

The protein belongs to the TatC family.

The protein localises to the mitochondrion membrane. This is an uncharacterized protein from Arabidopsis thaliana (Mouse-ear cress).